The primary structure comprises 293 residues: Acetyl-coenzyme A carboxylase carboxyl transferase subunit beta (293 aa).

The region spanning 29-293 (LWSKCPECGL…GCRPMEITSA (265 aa)) is the CoA carboxyltransferase N-terminal domain. Residues C33, C36, C52, and C55 each coordinate Zn(2+). The C4-type zinc finger occupies 33–55 (CPECGLVVYVKDLKGNASVCAGC).

Belongs to the AccD/PCCB family. As to quaternary structure, acetyl-CoA carboxylase is a heterohexamer composed of biotin carboxyl carrier protein (AccB), biotin carboxylase (AccC) and two subunits each of ACCase subunit alpha (AccA) and ACCase subunit beta (AccD). The cofactor is Zn(2+).

The protein resides in the cytoplasm. The enzyme catalyses N(6)-carboxybiotinyl-L-lysyl-[protein] + acetyl-CoA = N(6)-biotinyl-L-lysyl-[protein] + malonyl-CoA. It functions in the pathway lipid metabolism; malonyl-CoA biosynthesis; malonyl-CoA from acetyl-CoA: step 1/1. In terms of biological role, component of the acetyl coenzyme A carboxylase (ACC) complex. Biotin carboxylase (BC) catalyzes the carboxylation of biotin on its carrier protein (BCCP) and then the CO(2) group is transferred by the transcarboxylase to acetyl-CoA to form malonyl-CoA. This chain is Acetyl-coenzyme A carboxylase carboxyl transferase subunit beta, found in Parasynechococcus marenigrum (strain WH8102).